The following is a 60-amino-acid chain: Mastoparan-VT4 (60 aa).

Residues 1 to 27 (MKNPILILFTAFIALLGFFGMSAEALA) form the signal peptide. AXPX repeat units lie at residues 27–30 (ADPK), 31–34 (ADPL), 35–38 (AGPN), and 41–44 (ADPE). Residues 28 to 45 (DPKADPLAGPNPDADPEA) constitute a propeptide that is removed on maturation. Leu-59 is subject to Leucine amide.

The protein belongs to the MCD family. Mastoparan subfamily. As to expression, expressed by the venom gland.

It is found in the secreted. Its function is as follows. The synthetic peptide shows antimicrobial activities against Gram-negative bacteria (but not against all strains tested), Gram-positive bacteria (not all strains tested) and the fungi C.albicans and C.parapsilosis. Exhibits little hemolytic activity against washed human erythrocytes. This Vespa tropica (Greater banded hornet) protein is Mastoparan-VT4.